The chain runs to 300 residues: Aspartate carbamoyltransferase catalytic subunit (300 aa).

Carbamoyl phosphate contacts are provided by Arg50 and Thr51. Residue Lys78 participates in L-aspartate binding. Carbamoyl phosphate contacts are provided by Arg100, His127, and Gln130. Residues Arg160 and Arg210 each coordinate L-aspartate. The carbamoyl phosphate site is built by Ala253 and Pro254.

It belongs to the aspartate/ornithine carbamoyltransferase superfamily. ATCase family. In terms of assembly, heterododecamer (2C3:3R2) of six catalytic PyrB chains organized as two trimers (C3), and six regulatory PyrI chains organized as three dimers (R2).

The enzyme catalyses carbamoyl phosphate + L-aspartate = N-carbamoyl-L-aspartate + phosphate + H(+). Its pathway is pyrimidine metabolism; UMP biosynthesis via de novo pathway; (S)-dihydroorotate from bicarbonate: step 2/3. In terms of biological role, catalyzes the condensation of carbamoyl phosphate and aspartate to form carbamoyl aspartate and inorganic phosphate, the committed step in the de novo pyrimidine nucleotide biosynthesis pathway. This chain is Aspartate carbamoyltransferase catalytic subunit, found in Staphylococcus saprophyticus subsp. saprophyticus (strain ATCC 15305 / DSM 20229 / NCIMB 8711 / NCTC 7292 / S-41).